The following is a 51-amino-acid chain: Large ribosomal subunit protein eL39 (51 aa).

The protein belongs to the eukaryotic ribosomal protein eL39 family.

In Sulfurisphaera tokodaii (strain DSM 16993 / JCM 10545 / NBRC 100140 / 7) (Sulfolobus tokodaii), this protein is Large ribosomal subunit protein eL39.